The chain runs to 193 residues: dCTP deaminase (193 aa).

DCTP-binding positions include 110–115 (RSSLAR), D128, 136–138 (VLE), Y171, K178, and Q182. E138 serves as the catalytic Proton donor/acceptor. The tract at residues 169-193 (RPYNSRQDAKYRDQQGAVASRIDKD) is disordered.

Belongs to the dCTP deaminase family. Homotrimer.

It catalyses the reaction dCTP + H2O + H(+) = dUTP + NH4(+). It participates in pyrimidine metabolism; dUMP biosynthesis; dUMP from dCTP (dUTP route): step 1/2. Functionally, catalyzes the deamination of dCTP to dUTP. This is dCTP deaminase from Serratia proteamaculans (strain 568).